Reading from the N-terminus, the 277-residue chain is Bis(5'-nucleosyl)-tetraphosphatase, symmetrical (277 aa).

This sequence belongs to the Ap4A hydrolase family.

The catalysed reaction is P(1),P(4)-bis(5'-adenosyl) tetraphosphate + H2O = 2 ADP + 2 H(+). Functionally, hydrolyzes diadenosine 5',5'''-P1,P4-tetraphosphate to yield ADP. The protein is Bis(5'-nucleosyl)-tetraphosphatase, symmetrical of Azotobacter vinelandii (strain DJ / ATCC BAA-1303).